A 137-amino-acid polypeptide reads, in one-letter code: Basic phospholipase A2 homolog W6D49 (137 aa).

An N-terminal signal peptide occupies residues 1-16 (MRTLWILAVLLVSVDG). 7 disulfides stabilise this stretch: C42-C131, C44-C60, C59-C111, C65-C137, C66-C104, C73-C97, and C91-C102. The segment at 121-133 (KKQQFNTGIFCSK) is important for membrane-damaging activities in eukaryotes and bacteria; heparin-binding.

In terms of assembly, monomer. In terms of tissue distribution, expressed by the venom gland.

The protein resides in the secreted. Its activity is regulated as follows. Heparin reduces its edema-inducing activity. In terms of biological role, snake venom phospholipase A2 homolog that lacks enzymatic activity. Shows myotoxin activities and displays edema-inducing activities. A model of myotoxic mechanism has been proposed: an apo Lys49-PLA2 is activated by the entrance of a hydrophobic molecule (e.g. fatty acid) at the hydrophobic channel of the protein leading to a reorientation of a monomer. This reorientation causes a transition between 'inactive' to 'active' states, causing alignment of C-terminal and membrane-docking sites (MDoS) side-by-side and putting the membrane-disruption sites (MDiS) in the same plane, exposed to solvent and in a symmetric position for both monomers. The MDoS region stabilizes the toxin on membrane by the interaction of charged residues with phospholipid head groups. Subsequently, the MDiS region destabilizes the membrane with penetration of hydrophobic residues. This insertion causes a disorganization of the membrane, allowing an uncontrolled influx of ions (i.e. calcium and sodium), and eventually triggering irreversible intracellular alterations and cell death. The chain is Basic phospholipase A2 homolog W6D49 from Calloselasma rhodostoma (Malayan pit viper).